The primary structure comprises 141 residues: Putative nickel-responsive regulator (141 aa).

H80, H91, H93, and C99 together coordinate Ni(2+).

The protein belongs to the transcriptional regulatory CopG/NikR family. Requires Ni(2+) as cofactor.

In terms of biological role, transcriptional regulator. This chain is Putative nickel-responsive regulator, found in Methanococcus maripaludis (strain DSM 14266 / JCM 13030 / NBRC 101832 / S2 / LL).